The primary structure comprises 271 residues: Sec-independent protein translocase protein TatC (271 aa).

A run of 6 helical transmembrane segments spans residues 35 to 55, 93 to 113, 124 to 144, 178 to 198, 213 to 233, and 234 to 254; these read IIWTFVYIAAGFGVCWWWHEQ, AFIAGLFVASPFVLYQVWLFI, YVLPFMFSTVLLFLGGGVFGY, IILGLGIVFEMPILVFFLALM, SILVIFVIAAIITPTTDIMNM, and CVFAAPMILLYILSIGVAFLV.

It belongs to the TatC family. Forms a complex with TatA.

It localises to the cell inner membrane. Its function is as follows. Part of the twin-arginine translocation (Tat) system that transports large folded proteins containing a characteristic twin-arginine motif in their signal peptide across membranes. The polypeptide is Sec-independent protein translocase protein TatC (Koribacter versatilis (strain Ellin345)).